We begin with the raw amino-acid sequence, 205 residues long: High frequency lysogenization protein HflD homolog (205 aa).

Belongs to the HflD family.

It localises to the cytoplasm. Its subcellular location is the cell inner membrane. The protein is High frequency lysogenization protein HflD homolog of Vibrio campbellii (strain ATCC BAA-1116).